A 257-amino-acid chain; its full sequence is HTH-type transcriptional activator mta (257 aa).

The HTH merR-type domain occupies 2–71 (KYQVKQVAEI…LDEIKEMLDH (70 aa)). A DNA-binding region (H-T-H motif) is located at residues 5-24 (VKQVAEISGVSIRTLHHYDN). Positions 71–74 (HPNF) are hinge. The interval 76-104 (RKAALQSQKEILMKKKQRMDEMIQTIDRT) is essential for dimerization. Residues 76-107 (RKAALQSQKEILMKKKQRMDEMIQTIDRTLLS) adopt a coiled-coil conformation.

Homodimer.

It localises to the cytoplasm. Its function is as follows. Global transcriptional regulator that activates transcription of bmr and blt by binding directly to their promoter. Also stimulates the expression of the mta gene itself, ydfK and ymfE. In Bacillus subtilis (strain 168), this protein is HTH-type transcriptional activator mta (mta).